A 596-amino-acid chain; its full sequence is Glomulin (596 aa).

Position 2 is an N-acetylalanine (Ala-2). Positions 2 to 555 are alpha-helical region with structural similarity to HEAT repeats; that stretch reads AVEELQSIIK…EEIPSMPPEM (554 aa). The tract at residues 299-596 is important for interaction with RBX1; the sequence is IDQLPMVLSP…STSEENVGIK (298 aa).

As to quaternary structure, interacts with FKBP4 and FKBP1A. Interacts with RBX1 (via RING domain). Identified in complexes that contain RBX1 plus one of the cullins CUL1, CUL2, CUL3, and CUL4A. Identified in a SCF complex composed of CUL1, RBX1, SKP1, FBXW7 and GLMN. Component of a SCF-like complex consisting of CUL7, RBX1, SKP1, FBXW8 and GLMN. Interacts with unphosphorylated MET and is released upon MET phosphorylation. In terms of processing, phosphorylated on tyrosine residues. As to expression, ubiquitous. Detected in embryonic vasculature and embryonic perichondrium, and in adult eye, brain, heart, testis, kidney, smooth muscle and skeletal muscle.

Functionally, regulatory component of cullin-RING-based SCF (SKP1-Cullin-F-box protein) E3 ubiquitin-protein ligase complexes. Inhibits E3 ubiquitin ligase activity by binding to the RING domain of RBX1 and inhibiting its interaction with the E2 ubiquitin-conjugating enzyme CDC34. Inhibits RBX1-mediated neddylation of CUL1. Required for normal stability and normal cellular levels of key components of SCF ubiquitin ligase complexes, including FBXW7, RBX1, CUL1, CUL2, CUL3, CUL4A, and thereby contributes to the regulation of CCNE1 and MYC levels. Essential for normal development of the vasculature. Contributes to the regulation of RPS6KB1 phosphorylation. The protein is Glomulin (Glmn) of Mus musculus (Mouse).